Consider the following 518-residue polypeptide: Probable alginate O-acetylase AlgI (518 aa).

8 helical membrane-spanning segments follow: residues 2 to 24, 39 to 61, 78 to 100, 115 to 137, 150 to 172, 319 to 341, 354 to 373, and 402 to 424; these read VFSSNVFLFMFLPIFLGLYYLSG, FYAWWRVDFLALFIGVTVWNYWI, WLLLGVIVDLCILGYFKYANFGV, FILTHVLLPIGISFYVFESISYI, NLIDFAAFVAIFPHLIAGPVLRF, GLWHGANVTYIIWGAWHGMWLAI, FNVIRWALTFLLVVIGWVIF, and ASLTGLQVATLVVAYATLAFFGL. Residue histidine 322 is part of the active site. Positions 435–456 are disordered; sequence SGKSARADGPATEQPGTIKAVP. Residues 493-515 form a helical membrane-spanning segment; sequence LILLLFVASILKLSAQSFSPFLY.

It belongs to the membrane-bound acyltransferase family.

It is found in the cell inner membrane. The protein operates within glycan biosynthesis; alginate biosynthesis. In terms of biological role, together with AlgJ and AlgF, forms an inner membrane complex which probably interacts with the alginate polymerization-transport complex and adds acetyl groups at the O-2 and O-3 positions of mannuronate residues. Acetylation of alginate is important for the architecture of biofilms and increases the ability of alginate to act as a defense barrier. The polypeptide is Probable alginate O-acetylase AlgI (algI) (Pseudomonas syringae pv. tomato (strain ATCC BAA-871 / DC3000)).